The primary structure comprises 147 residues: MMKLNLFINANETESYIDIHAPKMNDHVQSIINAVNDLDKSHTLVGYIDKEIHIINVSDVITFQVINKNVTAITSNQKFKLKLRLYELEKQLPQHFIRISKSEIVNKYYIEKLLLEPNGLIRMYLKDAHYTYSSRRFLKSIKERLSI.

Positions 44 to 147 (LVGYIDKEIH…LKSIKERLSI (104 aa)) constitute an HTH LytTR-type domain.

The protein localises to the cytoplasm. This is an uncharacterized protein from Staphylococcus aureus (strain MRSA252).